Here is a 367-residue protein sequence, read N- to C-terminus: Heme A synthase (367 aa).

The next 5 membrane-spanning stretches (helical) occupy residues 25 to 45 (ALRF…LVGG), 111 to 131 (LIAR…WLTG), 139 to 159 (WPLV…WWMV), 174 to 194 (LATH…IMRG), and 210 to 230 (GFAA…ALVA). Histidine 274 serves as a coordination point for heme. Helical transmembrane passes span 276–296 (IGAY…LRAA), 305–325 (AVVL…TLLM), and 327–347 (VPLH…GFAI). Residue histidine 335 participates in heme binding.

This sequence belongs to the COX15/CtaA family. Type 2 subfamily. In terms of assembly, interacts with CtaB. Heme b serves as cofactor.

The protein localises to the cell membrane. It catalyses the reaction Fe(II)-heme o + 2 A + H2O = Fe(II)-heme a + 2 AH2. Its pathway is porphyrin-containing compound metabolism; heme A biosynthesis; heme A from heme O: step 1/1. In terms of biological role, catalyzes the conversion of heme O to heme A by two successive hydroxylations of the methyl group at C8. The first hydroxylation forms heme I, the second hydroxylation results in an unstable dihydroxymethyl group, which spontaneously dehydrates, resulting in the formyl group of heme A. The chain is Heme A synthase from Rhizobium leguminosarum bv. trifolii (strain WSM2304).